A 266-amino-acid polypeptide reads, in one-letter code: MVIYLDVLIFENSIVNTFLLYITAQTLRIKVKMRYLILAGIFGGLYVIVLVIPTLKIFSSLIFKIIAAFLMIIICFRKKSLRFNIKALAVLIMYSMVTAGLCFFIELNNTRGSYFNAFIGNVSYKWILIAIMIIYMFVNRIIWFINDRKLTQSLIYEIEICFKDNSKFINAFLDTGNELREPITNLPVIVVEKDMVSGIKWDDCPKFYVPFRLFNGKAGNLEAFKPSYVKIYIGDKVEVRNAIIALIDNKLSSLNDYNALLSRGSI.

Helical transmembrane passes span 36–52 (LILA…VLVI), 60–76 (SLIF…IICF), 89–105 (AVLI…CFFI), and 126–142 (WILI…NRII). Residue D174 is part of the active site.

Belongs to the peptidase U4 family.

The protein resides in the cell membrane. In terms of biological role, probable aspartic protease that is responsible for the proteolytic cleavage of the RNA polymerase sigma E factor (SigE/spoIIGB) to yield the active peptide in the mother cell during sporulation. Responds to a signal from the forespore that is triggered by the extracellular signal protein SpoIIR. This chain is Probable sporulation sigma-E factor-processing peptidase (spoIIGA), found in Clostridium acetobutylicum (strain ATCC 824 / DSM 792 / JCM 1419 / IAM 19013 / LMG 5710 / NBRC 13948 / NRRL B-527 / VKM B-1787 / 2291 / W).